The primary structure comprises 218 residues: Small ribosomal subunit protein uS3 (218 aa).

The region spanning 38–106 (IREFISKRLS…RVHINILEIK (69 aa)) is the KH type-2 domain.

The protein belongs to the universal ribosomal protein uS3 family. As to quaternary structure, part of the 30S ribosomal subunit. Forms a tight complex with proteins S10 and S14.

Functionally, binds the lower part of the 30S subunit head. Binds mRNA in the 70S ribosome, positioning it for translation. The protein is Small ribosomal subunit protein uS3 of Bacillus pumilus (strain SAFR-032).